We begin with the raw amino-acid sequence, 342 residues long: MKILGIETSCDETGVAIYDEEKGLIANQLYTQIALHADYGGVVPELASRDHIRKTAPLIKAALEEANLTASDIDGIAYTSGPGLVGALLVGATIARSLAYAWNVPAIGVHHMEGHLLAPMLDDNSPHFPFVALLVSGGHTQLVRVDGVGKYEVIGESIDDAAGEAFDKTAKLLGLDYPGGAALSRLAEKGTPNRFTFPRPMTDRAGLDFSFSGLKTFAANTVNQAIKNEGELIEQTKADIAYAFQDAVVDTLAIKCKRALKETGYKRLVIAGGVSANKKLRETLAHLMQNLGGEVFYPQPQFCTDNGAMIAYTGFLRLKQGQHSDLAIDVKPRWAMAELPAI.

Positions 111 and 115 each coordinate Fe cation. Substrate contacts are provided by residues 134 to 138 (LVSGG), D167, G180, and N277. Residue D305 participates in Fe cation binding.

The protein belongs to the KAE1 / TsaD family. The cofactor is Fe(2+).

The protein resides in the cytoplasm. The catalysed reaction is L-threonylcarbamoyladenylate + adenosine(37) in tRNA = N(6)-L-threonylcarbamoyladenosine(37) in tRNA + AMP + H(+). Functionally, required for the formation of a threonylcarbamoyl group on adenosine at position 37 (t(6)A37) in tRNAs that read codons beginning with adenine. Is involved in the transfer of the threonylcarbamoyl moiety of threonylcarbamoyl-AMP (TC-AMP) to the N6 group of A37, together with TsaE and TsaB. TsaD likely plays a direct catalytic role in this reaction. This is tRNA N6-adenosine threonylcarbamoyltransferase from Haemophilus influenzae (strain ATCC 51907 / DSM 11121 / KW20 / Rd).